A 351-amino-acid polypeptide reads, in one-letter code: DNA polymerase IV (351 aa).

One can recognise a UmuC domain in the interval Ile4–Gly185. Mg(2+) is bound by residues Asp8 and Asp103. Glu104 is an active-site residue.

Belongs to the DNA polymerase type-Y family. As to quaternary structure, monomer. The cofactor is Mg(2+).

The protein resides in the cytoplasm. The catalysed reaction is DNA(n) + a 2'-deoxyribonucleoside 5'-triphosphate = DNA(n+1) + diphosphate. Its function is as follows. Poorly processive, error-prone DNA polymerase involved in untargeted mutagenesis. Copies undamaged DNA at stalled replication forks, which arise in vivo from mismatched or misaligned primer ends. These misaligned primers can be extended by PolIV. Exhibits no 3'-5' exonuclease (proofreading) activity. May be involved in translesional synthesis, in conjunction with the beta clamp from PolIII. The polypeptide is DNA polymerase IV (Shigella flexneri).